The following is a 284-amino-acid chain: Cell division protein FtsQ (284 aa).

The Cytoplasmic segment spans residues 1–31 (MAQLPASMRRKRAAITSIHDKPPTRKQKLAN). A helical membrane pass occupies residues 32 to 52 (AGGWVLLVIAFVVLAVGIYGL). Over 53 to 284 (YKVITDATVA…SIAGGTKAKP (232 aa)) the chain is Periplasmic. Residues 59 to 128 (ATVAKLEVVG…NGIRVRVMPR (70 aa)) form the POTRA domain.

The protein belongs to the FtsQ/DivIB family. FtsQ subfamily. Part of a complex composed of FtsB, FtsL and FtsQ.

The protein localises to the cell inner membrane. In terms of biological role, essential cell division protein. May link together the upstream cell division proteins, which are predominantly cytoplasmic, with the downstream cell division proteins, which are predominantly periplasmic. May control correct divisome assembly. The sequence is that of Cell division protein FtsQ from Acinetobacter oleivorans (strain JCM 16667 / KCTC 23045 / DR1).